Reading from the N-terminus, the 190-residue chain is Jupiter microtubule associated homolog 2 (190 aa).

N-acetylmethionine is present on Met1. The interval 1 to 190 is disordered; it reads MFQVPDSEGG…PGGKSSISFY (190 aa). Ser30 carries the phosphoserine modification. Phosphothreonine is present on Thr35. The segment covering 35-44 has biased composition (polar residues); that stretch reads TPSSRPNRMA. Ser45, Ser69, and Ser97 each carry phosphoserine. A compositionally biased stretch (basic and acidic residues) spans 110–129; the sequence is KPKDHVFLCEGEEPKSDLKA. 2 positions are modified to phosphoserine: Ser132 and Ser144. Over residues 139–167 the composition is skewed to basic and acidic residues; that stretch reads PGEKGSARKAGPAKEQEPMPTVDSHEPRL.

It belongs to the JUPITER family. As to quaternary structure, monomer. Dimer. Interacts with TPCN1. As to expression, expressed in liver, kidney, prostate, testis and uterus.

It localises to the cytoplasm. Its subcellular location is the nucleus. Functionally, nicotinic acid adenine dinucleotide phosphate (NAADP) binding protein required for NAADP-evoked intracellular calcium release. Confers NAADP-sensitivity to the two pore channels (TPCs) complex. Enables NAADP to activate Ca(2+) release from the endoplasmic reticulum through ryanodine receptors. In terms of biological role, (Microbial infection) Involved in the endolysosomal trafficking of human coronavirus SARS-CoV-2. This Homo sapiens (Human) protein is Jupiter microtubule associated homolog 2.